A 213-amino-acid chain; its full sequence is GTP cyclohydrolase 1 (213 aa).

The segment at 1 to 27 (MDDVVKSLLQRTTSSLTKPAPARPSRE) is disordered. Cys100, His103, and Cys172 together coordinate Zn(2+).

Belongs to the GTP cyclohydrolase I family. As to quaternary structure, homomer.

It catalyses the reaction GTP + H2O = 7,8-dihydroneopterin 3'-triphosphate + formate + H(+). The protein operates within cofactor biosynthesis; 7,8-dihydroneopterin triphosphate biosynthesis; 7,8-dihydroneopterin triphosphate from GTP: step 1/1. This is GTP cyclohydrolase 1 from Beijerinckia indica subsp. indica (strain ATCC 9039 / DSM 1715 / NCIMB 8712).